A 475-amino-acid polypeptide reads, in one-letter code: Bifunctional protein HldE (475 aa).

Positions 1 to 318 (MKVTLPDFER…ENAVRGRAET (318 aa)) are ribokinase. 195 to 198 (NLSE) lines the ATP pocket. D264 is an active-site residue. Residues 344-475 (MTNGVFDILH…NIIKKIQKNS (132 aa)) form a cytidylyltransferase region.

It in the N-terminal section; belongs to the carbohydrate kinase PfkB family. In the C-terminal section; belongs to the cytidylyltransferase family. As to quaternary structure, homodimer.

The catalysed reaction is D-glycero-beta-D-manno-heptose 7-phosphate + ATP = D-glycero-beta-D-manno-heptose 1,7-bisphosphate + ADP + H(+). It carries out the reaction D-glycero-beta-D-manno-heptose 1-phosphate + ATP + H(+) = ADP-D-glycero-beta-D-manno-heptose + diphosphate. It participates in nucleotide-sugar biosynthesis; ADP-L-glycero-beta-D-manno-heptose biosynthesis; ADP-L-glycero-beta-D-manno-heptose from D-glycero-beta-D-manno-heptose 7-phosphate: step 1/4. Its pathway is nucleotide-sugar biosynthesis; ADP-L-glycero-beta-D-manno-heptose biosynthesis; ADP-L-glycero-beta-D-manno-heptose from D-glycero-beta-D-manno-heptose 7-phosphate: step 3/4. In terms of biological role, catalyzes the phosphorylation of D-glycero-D-manno-heptose 7-phosphate at the C-1 position to selectively form D-glycero-beta-D-manno-heptose-1,7-bisphosphate. Functionally, catalyzes the ADP transfer from ATP to D-glycero-beta-D-manno-heptose 1-phosphate, yielding ADP-D-glycero-beta-D-manno-heptose. In Cronobacter sakazakii (strain ATCC BAA-894) (Enterobacter sakazakii), this protein is Bifunctional protein HldE.